The primary structure comprises 117 residues: G antigen 12I (117 aa).

The interval 1–117 is disordered; the sequence is MSWRGRSTYY…PEEGEKQSQC (117 aa). Acidic residues-rich tracts occupy residues 32–45 and 87–96; these read FSDEVEPATPEEGE and ECEDGPDGQE. The segment covering 103–117 has biased composition (basic and acidic residues); the sequence is EEVKTPEEGEKQSQC.

Belongs to the GAGE family. In terms of assembly, forms tetramers.

This is G antigen 12I (GAGE12I) from Homo sapiens (Human).